Consider the following 314-residue polypeptide: Olfactory receptor 1E2 (314 aa).

Residues 1-25 (MMGQNQTSISDFLLLGLPIQPEQQN) lie on the Extracellular side of the membrane. Residue N5 is glycosylated (N-linked (GlcNAc...) asparagine). The chain crosses the membrane as a helical span at residues 26-49 (LCYALFLAMYLTTLLGNLLIIVLI). The Cytoplasmic portion of the chain corresponds to 50–57 (RLDSHLHT). A helical transmembrane segment spans residues 58-79 (PMYLFLSNLSFSDLCFSSVTIP). Over 80–100 (KLLQNMQNQDPSIPYADCLTQ) the chain is Extracellular. C97 and C189 are joined by a disulfide. A helical transmembrane segment spans residues 101–120 (MYFFLLFGDLESFLLVAMAY). Over 121–139 (DRYVAICFPLHYTAIMSPM) the chain is Cytoplasmic. Residues 140–158 (LCLSLVALSWVLTTFHAML) form a helical membrane-spanning segment. The Extracellular segment spans residues 159-195 (HTLLMARLCFCADNVIPHFFCDMSALLKLACSDTRVN). A helical membrane pass occupies residues 196 to 219 (EWVIFIMGGLIVVIPFLLILGSYA). Residues 220–236 (RIVSSILKVPSSKGICK) are Cytoplasmic-facing. The chain crosses the membrane as a helical span at residues 237–259 (AFSTCGSHLSVVSLFYGTIIGLY). The Extracellular segment spans residues 260-272 (LCPSANSSTLKET). A glycan (N-linked (GlcNAc...) asparagine) is linked at N265. The helical transmembrane segment at 273-292 (VMAMMYTVVTPMLNPFIYSL) threads the bilayer. Residues 293–314 (RNRDMKGALERVICKRKNPFLL) lie on the Cytoplasmic side of the membrane.

It belongs to the G-protein coupled receptor 1 family.

The protein resides in the cell membrane. Its function is as follows. Odorant receptor. The polypeptide is Olfactory receptor 1E2 (OR1E2) (Gorilla gorilla gorilla (Western lowland gorilla)).